The sequence spans 342 residues: MNTNNFDFELPEELIAQTPLEKRDSSKLLIIDHRQKTMVDSHFDHIIDQLNPGDALVMNNTRVLPARLYGEKPDTHGHVELLLLKNTQGDQWEVLAKPAKRLKVGSQVNFGDGRLKATIIDELEHGGRIVEFSYDGIFLEVLESLGEMPLPPYIHEKLEDAERYQTVYAKENGSAAAPTAGLHFTTDLLKKIEAKGVHLVYLTLHVGLGTFRPVSVDNLDEHDMHSEFYSLSEEAAQTLRDVKQAGGRVVAVGTTSIRTLETIGGKFQGDIQADSGWTNIFIKPGYQFKVVDAFSTNFHLPKSTLVMLVSAFAGRDFVLEAYRHAVDEKYRFFSFGDAMFVN.

The protein belongs to the QueA family. Monomer.

The protein resides in the cytoplasm. The catalysed reaction is 7-aminomethyl-7-carbaguanosine(34) in tRNA + S-adenosyl-L-methionine = epoxyqueuosine(34) in tRNA + adenine + L-methionine + 2 H(+). It participates in tRNA modification; tRNA-queuosine biosynthesis. In terms of biological role, transfers and isomerizes the ribose moiety from AdoMet to the 7-aminomethyl group of 7-deazaguanine (preQ1-tRNA) to give epoxyqueuosine (oQ-tRNA). The chain is S-adenosylmethionine:tRNA ribosyltransferase-isomerase from Streptococcus pyogenes serotype M1.